Here is a 284-residue protein sequence, read N- to C-terminus: Large ribosomal subunit protein uL2 (284 aa).

The interval 232–284 is disordered; sequence RGTAMNPVDHPHGGGEGRHNGYIPRTPWGKVTKGLKTRDKRKSNKWIVKDRRK. Basic and acidic residues predominate over residues 240-250; it reads DHPHGGGEGRH. A compositionally biased stretch (basic residues) spans 264–284; sequence KGLKTRDKRKSNKWIVKDRRK.

This sequence belongs to the universal ribosomal protein uL2 family. Part of the 50S ribosomal subunit. Forms a bridge to the 30S subunit in the 70S ribosome.

Functionally, one of the primary rRNA binding proteins. Required for association of the 30S and 50S subunits to form the 70S ribosome, for tRNA binding and peptide bond formation. It has been suggested to have peptidyltransferase activity; this is somewhat controversial. Makes several contacts with the 16S rRNA in the 70S ribosome. The protein is Large ribosomal subunit protein uL2 of Chlamydia felis (strain Fe/C-56) (Chlamydophila felis).